The following is a 301-amino-acid chain: MLSEGYLSGLEYWNDIHWSCASYNEQVAGEKEEETNSVATLSYSSVDETQVRSLYVSCKSSGKFISSVHSRESQHSRSQRVTVLQTNPNPVFESPNLAAVEICRDASRETYLVPSSCKSICKNYNDLQIAGGQVMAINSVTTDFPSESSFEYGPLLKSSEIPLPMEDSISTQPSDFPQKPIQRYSSYWRITSIKEKSSLQMQNPISNAVLNEYLEQKVVELYKQYIMDTVFHDSSPTQILASELIMTSVDQISLQVSREKNLETSKARDIVFSRLLQLMSTEITEISTPSLHISQYSNVNP.

Residues 290–294 (SLHIS) carry the pLxIS motif motif. Ser294 is modified (phosphoserine).

In terms of assembly, interacts (via pLxIS motif) with IRF5; leading to IRF5 activation. Interacts with SLC15A4; leading to its recruitment to endolysosome. The phosphorylated pLxIS motif constitutes an IRF5-binding motif, leading to recruitment of the transcription factor IRF5 to induce type-I interferons and other cytokines. In terms of tissue distribution, highly expressed in immune cell types such as B-cells, neutrophils, dendritic cells and monocytes, the expression levels are two-three-fold higher in female cells compared to male cells (at protein level). Expressed at low levels in T-cells and NK cells.

The protein resides in the lysosome membrane. The protein localises to the endosome membrane. Its subcellular location is the nucleus. It localises to the cytoplasm. Innate immune adapter that mediates the recruitment and activation of IRF5 downstream of endolysosomal toll-like receptors TLR7, TLR8 and TLR9. Following recruitment to endolysosome by SLC15A4 downstream of TLR7, TLR8 and TLR9, specifically recruits IRF5 transcription factor via its pLxIS motif, leading to IRF5 activation and subsequent expression of type I interferons. Plays a role in the regulation of endolysosomal pH in immune cells such as B-cells, dendritic cells and monocytes. In Homo sapiens (Human), this protein is TLR adapter interacting with SLC15A4 on the lysosome.